We begin with the raw amino-acid sequence, 441 residues long: Bacteria-responsive protein 1 (441 aa).

An N-terminal signal peptide occupies residues 1–18 (MWFFKVGALLFLAALVSA). Asparagine 20 is a glycosylation site (N-linked (GlcNAc...) asparagine). Residues 25 to 441 (PKVLCYYDGQ…PILRAAKYRL (417 aa)) form the GH18 domain. Cysteines 29 and 56 form a disulfide. Asparagine 225 carries N-linked (GlcNAc...) asparagine glycosylation.

The protein belongs to the glycosyl hydrolase 18 family. IDGF subfamily. As to expression, salivary gland (at protein level).

Its subcellular location is the secreted. In terms of biological role, promotes recruitment of host neutrophils at the bite site. Induces expression of IL1B and IL6 in the skin of the host. Its function is as follows. (Microbial infection) Enhances Zika virus replication and exacerbates disease pathogenesis in the host. The protein is Bacteria-responsive protein 1 of Aedes aegypti (Yellowfever mosquito).